A 70-amino-acid chain; its full sequence is Cold shock-like protein CspH (70 aa).

In terms of domain architecture, CSD spans 7–67 (GIVKTFDCKS…GLRGPTAANV (61 aa)).

It is found in the cytoplasm. This chain is Cold shock-like protein CspH (cspH), found in Salmonella typhi.